The chain runs to 619 residues: Chaperone protein HscA homolog (619 aa).

Belongs to the heat shock protein 70 family.

In terms of biological role, chaperone involved in the maturation of iron-sulfur cluster-containing proteins. Has a low intrinsic ATPase activity which is markedly stimulated by HscB. The sequence is that of Chaperone protein HscA homolog from Shewanella frigidimarina (strain NCIMB 400).